Consider the following 160-residue polypeptide: MMPAKLQLDVLRTLQSSARHGTQTLKNSNFLERFHKDRIVFCLPFFPALFLVPVQKVLQHLCLRFTQVAPYFIIQLFDLPSRHAENLAPLLASCRIQYTNCFSSSSNGQVPSIISLYLRVDLSPFYAKIFQISYRVPMIWLDVFQVFFVFLVISQHSLHS.

The next 2 membrane-spanning stretches (helical) occupy residues 39–59 (IVFCLPFFPALFLVPVQKVLQ) and 136–156 (VPMIWLDVFQVFFVFLVISQH).

It belongs to the UPF0479 family.

The protein localises to the membrane. The sequence is that of Putative UPF0479 protein YLR466C-A from Saccharomyces cerevisiae (strain ATCC 204508 / S288c) (Baker's yeast).